A 358-amino-acid chain; its full sequence is MAKELAEKAKEAFLDDDFDVAVDLYSKAIDLDPNCAAFFADRAQANIKIDNFTEAVVDANKAIELEPTLAKAYLRKGTACMKLEEYSTAKAALEKGASVAPNEPKFKKMIDECDLRIAEEEKDLVQPMPPSLPSSSTTPLATEADAPPVPIPAAPAKPMFRHEFYQKPEEAVVTIFAKKVPKENVTVEFGEQILSVVIDVAGEEAYHLQPRLFGKIIPEKCRFEVLSTKVEIRLAKAEIITWASLEYGKGQSVLPKPNVSSALSQRPVYPSSKPAKDWDKLEAEVKKQEKDEKLDGDAAMNKFFSDIYSSADEDMRRAMNKSFAESNGTVLSTNWKEVGTKKVESTPPDGMELKKWEY.

TPR repeat units follow at residues 2 to 35 (AKELAEKAKEAFLDDDFDVAVDLYSKAIDLDPNC), 37 to 69 (AFFADRAQANIKIDNFTEAVVDANKAIELEPTL), and 70 to 103 (AKAYLRKGTACMKLEEYSTAKAALEKGASVAPNE). Residues 157-246 (KPMFRHEFYQ…AEIITWASLE (90 aa)) form the CS domain. A disordered region spans residues 255-275 (PKPNVSSALSQRPVYPSSKPA). Residues 268 to 358 (VYPSSKPAKD…DGMELKKWEY (91 aa)) form the SGS domain.

It belongs to the SGT1 family. As to quaternary structure, interacts with RAR1 and HSP90-2. Interacts (via SGS domain) with HSC70-1 and HSC70-3.

The protein resides in the cytoplasm. Its subcellular location is the nucleus. In terms of biological role, involved in plant innate immunity. Essential for race-specific resistance conferred by multiple R genes, including RPP7, recognizing different oomycete pathogen isolates like avirulent Hyaloperonospora arabidopsidis (downy mildew). Contributes additively with RAR1 to RPP5-dependent resistance. Not required for RPM1, RPS2, RPS4 and RPS5-mediated resistance. Functions as a negative regulator of RPS5 accumulation by assisting its degradation. May be involved in heat shock response by associating with HSC70-1 chaperone. Required for the SCF(TIR1)-mediated degradation of Aux/IAA proteins, but maybe not for SCF(TIR1) assembly or binding to its Aux/IAA substrates. Probably required for SCF-mediated ubiquitination, by coupling HSP90 to SCF complex for ubiquitination of HSP90 client proteins. Required for the coronatine/jasmonic acid-mediated signal transduction pathway. This Arabidopsis thaliana (Mouse-ear cress) protein is Protein SGT1 homolog B.